The sequence spans 429 residues: Glutamate-1-semialdehyde 2,1-aminomutase 2 (429 aa).

Lys-268 is subject to N6-(pyridoxal phosphate)lysine.

It belongs to the class-III pyridoxal-phosphate-dependent aminotransferase family. HemL subfamily. In terms of assembly, homodimer. Requires pyridoxal 5'-phosphate as cofactor.

Its subcellular location is the cytoplasm. The enzyme catalyses (S)-4-amino-5-oxopentanoate = 5-aminolevulinate. Its pathway is porphyrin-containing compound metabolism; protoporphyrin-IX biosynthesis; 5-aminolevulinate from L-glutamyl-tRNA(Glu): step 2/2. This chain is Glutamate-1-semialdehyde 2,1-aminomutase 2, found in Halalkalibacterium halodurans (strain ATCC BAA-125 / DSM 18197 / FERM 7344 / JCM 9153 / C-125) (Bacillus halodurans).